The primary structure comprises 3110 residues: Huntingtin (3110 aa).

The disordered stretch occupies residues 1 to 58 (MKAFESLKSFQQQQQQQQPPPQPPPPPPPPPQPPQPPPQGQPPPPPPLPGPAEEPLHR). The residue at position 2 (Lys-2) is an N6-acetyllysine. Residues 18-52 (QPPPQPPPPPPPPPQPPQPPPQGQPPPPPPLPGPA) are compositionally biased toward pro residues. N6-acetyllysine is present on residues Lys-146 and Lys-204. 2 HEAT repeats span residues 174–211 (PYLV…SFGN) and 216–253 (NEIK…HSRR). An N6-acetyllysine modification is found at Lys-313. 3 positions are modified to phosphoserine: Ser-387, Ser-389, and Ser-402. The residue at position 412 (Lys-412) is an N6-acetyllysine. Residues 462 to 473 (GHDIITEQPRSQ) form an interaction with ZDHHC17 region. The tract at residues 487-549 (DLTSAATDGD…PDSAVTPSDS (63 aa)) is disordered. Polar residues predominate over residues 521–549 (DGTQASSPISDSSQTTTEGPDSAVTPSDS). The N-myristoyl glycine moiety is linked to residue Gly-522. Residues Ser-611 and Ser-614 each carry the phosphoserine modification. HEAT repeat units lie at residues 773-810 (FSLV…SLCS) and 873-911 (KLQE…KLFY). The segment at 1137-1195 (KAALPSLTNPPSLSPIRRKGKEKEPGEQTSTPMSPKKGGEASTASRQSDTSGPVTASKS) is disordered. Positions 1140-1151 (LPSLTNPPSLSP) are enriched in low complexity. Ser-1150 and Ser-1170 each carry phosphoserine; by CDK5. Residues 1178 to 1195 (STASRQSDTSGPVTASKS) show a composition bias toward polar residues. An HEAT 5 repeat occupies 1395 to 1432 (LFEPLVIKALKQYTTTTSVQLQKQVLDLLAQLVQLRVN). The residue at position 1845 (Ser-1845) is a Phosphoserine. A Nuclear export signal motif is present at residues 2363 to 2372 (IVVSLARLPL). A disordered region spans residues 2601-2628 (EEEWDEEEEEEADAPAPTSPPVSPVNSR). The segment covering 2602–2613 (EEWDEEEEEEAD) has biased composition (acidic residues).

The protein belongs to the huntingtin family. Interacts with PFN1. Interacts through its N-terminus with PRPF40A. Interacts with PQBP1. Interacts with SETD2. Interacts with SH3GLB1. Interacts with SYVN. Interacts with TPR; the interaction is inhibited by forms of Huntingtin with expanded polyglutamine stretch. Interacts with ZDHHC13 (via ANK repeats). Interacts with ZDHHC17 (via ANK repeats). Interacts with F8A1/F8A2/F8A3. Found in a complex with F8A1/F8A2/F8A3, HTT and RAB5A; mediates the recruitment of HTT by RAB5A. In terms of processing, phosphorylation at Ser-1150 and Ser-1170 by CDK5 in response to DNA damage in nuclei of neurons protects neurons against polyglutamine expansion as well as DNA damage mediated toxicity. Post-translationally, cleaved by caspases downstream of the polyglutamine stretch. Myristoylated at Gly-522, following proteolytic cleavage at Asp-521. Expressed to a high degree in all the regions of the brain of adults and in meiotic cells of the testis. In addition, very low levels are detected in various non-neuronal tissues (heart, muscle, liver, lung and kidney).

It is found in the cytoplasm. The protein localises to the nucleus. The protein resides in the cytoplasmic vesicle. Its subcellular location is the autophagosome. May play a role in microtubule-mediated transport or vesicle function. Its function is as follows. Promotes the formation of autophagic vesicles. This chain is Huntingtin (Htt), found in Rattus norvegicus (Rat).